A 363-amino-acid polypeptide reads, in one-letter code: Exopolygalacturonase rpg13 (363 aa).

A signal peptide spans 1 to 26 (MVKFLSLTSSVTALLLLSLGANGVAA). N121, N142, and N150 each carry an N-linked (GlcNAc...) asparagine glycan. 5 PbH1 repeats span residues 143-173 (ATDVLINNITLHTASTSSLRPKNTDALDVSR), 174-195 (SSNVVFQNSKLTVGDDCLAINE), 197-217 (VTNVTLSKITCNGGHGFSVGS), 227-248 (VKTVRIHDSVCNDCQNGVRIKT), and 256-277 (VSDIKFNNVELNNVENPILITT). Catalysis depends on D188, which acts as the Proton donor. A disulfide bridge links C190 with C207. N199 is a glycosylation site (N-linked (GlcNAc...) asparagine). H211 is an active-site residue. N321 carries an N-linked (GlcNAc...) asparagine glycan. Residues C322 and C328 are joined by a disulfide bond. The stretch at 328–354 (CTDFTLSGVKITKASNTPKNVCVNLDG) is one PbH1 6 repeat.

This sequence belongs to the glycosyl hydrolase 28 family. Post-translationally, N-glycosylated.

The protein resides in the secreted. The catalysed reaction is [(1-&gt;4)-alpha-D-galacturonosyl](n) + H2O = alpha-D-galacturonate + [(1-&gt;4)-alpha-D-galacturonosyl](n-1). Functionally, specific in hydrolyzing the terminal glycosidic bond of polygalacturonic acid and oligogalacturonates. Has no activity towards trigalacturonic acid. The chain is Exopolygalacturonase rpg13 from Rhizopus delemar (strain RA 99-880 / ATCC MYA-4621 / FGSC 9543 / NRRL 43880) (Mucormycosis agent).